Here is a 231-residue protein sequence, read N- to C-terminus: Floral homeotic protein PMADS 1 (231 aa).

The 56-residue stretch at 3–58 (RGKIQIKRIENQTNRQVTYSKRRNGLFKKANELTVLCDAKVSIIMISSTGKLHEFI) folds into the MADS-box domain. A K-box domain is found at 84–174 (YEKMQEQLRK…LLEFDARQED (91 aa)).

Predominantly expressed in petals and stamens, less in carpels and sepals.

The protein localises to the nucleus. Functionally, transcription factor involved in the genetic control of flower development. Necessary for the normal development of petals. Absence of the PMADS1 protein causes transformation of petals into sepals. The chain is Floral homeotic protein PMADS 1 (PMADS1) from Petunia hybrida (Petunia).